A 246-amino-acid chain; its full sequence is 3-deoxy-manno-octulosonate cytidylyltransferase (246 aa).

This sequence belongs to the KdsB family.

It is found in the cytoplasm. The catalysed reaction is 3-deoxy-alpha-D-manno-oct-2-ulosonate + CTP = CMP-3-deoxy-beta-D-manno-octulosonate + diphosphate. It functions in the pathway nucleotide-sugar biosynthesis; CMP-3-deoxy-D-manno-octulosonate biosynthesis; CMP-3-deoxy-D-manno-octulosonate from 3-deoxy-D-manno-octulosonate and CTP: step 1/1. Its pathway is bacterial outer membrane biogenesis; lipopolysaccharide biosynthesis. Its function is as follows. Activates KDO (a required 8-carbon sugar) for incorporation into bacterial lipopolysaccharide in Gram-negative bacteria. In Paramagnetospirillum magneticum (strain ATCC 700264 / AMB-1) (Magnetospirillum magneticum), this protein is 3-deoxy-manno-octulosonate cytidylyltransferase.